The sequence spans 737 residues: Phosphoribosylformylglycinamidine synthase subunit PurL (737 aa).

Residue H50 is part of the active site. Positions 53 and 92 each coordinate ATP. E94 is a Mg(2+) binding site. Residues 95 to 98 and R117 each bind substrate; that span reads SHNH. Catalysis depends on H96, which acts as the Proton acceptor. Mg(2+) is bound at residue D118. Q241 contacts substrate. Mg(2+) is bound at residue D269. Substrate is bound at residue 313 to 315; sequence ESQ. D494 and G531 together coordinate ATP. A Mg(2+)-binding site is contributed by N532. S534 lines the substrate pocket.

This sequence belongs to the FGAMS family. In terms of assembly, monomer. Part of the FGAM synthase complex composed of 1 PurL, 1 PurQ and 2 PurS subunits.

Its subcellular location is the cytoplasm. It catalyses the reaction N(2)-formyl-N(1)-(5-phospho-beta-D-ribosyl)glycinamide + L-glutamine + ATP + H2O = 2-formamido-N(1)-(5-O-phospho-beta-D-ribosyl)acetamidine + L-glutamate + ADP + phosphate + H(+). It functions in the pathway purine metabolism; IMP biosynthesis via de novo pathway; 5-amino-1-(5-phospho-D-ribosyl)imidazole from N(2)-formyl-N(1)-(5-phospho-D-ribosyl)glycinamide: step 1/2. Its function is as follows. Part of the phosphoribosylformylglycinamidine synthase complex involved in the purines biosynthetic pathway. Catalyzes the ATP-dependent conversion of formylglycinamide ribonucleotide (FGAR) and glutamine to yield formylglycinamidine ribonucleotide (FGAM) and glutamate. The FGAM synthase complex is composed of three subunits. PurQ produces an ammonia molecule by converting glutamine to glutamate. PurL transfers the ammonia molecule to FGAR to form FGAM in an ATP-dependent manner. PurS interacts with PurQ and PurL and is thought to assist in the transfer of the ammonia molecule from PurQ to PurL. The polypeptide is Phosphoribosylformylglycinamidine synthase subunit PurL (Rhodopseudomonas palustris (strain BisA53)).